Consider the following 364-residue polypeptide: Isopentenyl-diphosphate delta-isomerase (364 aa).

Residues 1–13 (MSSAQRKDDHVRL) are compositionally biased toward basic and acidic residues. The segment at 1-24 (MSSAQRKDDHVRLATEQQRAHSGR) is disordered. Residue 6–7 (RK) participates in substrate binding. FMN-binding positions include 64–66 (AMT), serine 94, and asparagine 123. 94–96 (SMH) contributes to the substrate binding site. Glutamine 153 is a substrate binding site. A Mg(2+)-binding site is contributed by glutamate 154. FMN-binding positions include lysine 185, serine 210, threonine 215, 259–261 (GIR), and 280–281 (SG).

It belongs to the IPP isomerase type 2 family. As to quaternary structure, homooctamer. Dimer of tetramers. FMN is required as a cofactor. The cofactor is NADPH. It depends on Mg(2+) as a cofactor.

It localises to the cytoplasm. The catalysed reaction is isopentenyl diphosphate = dimethylallyl diphosphate. Its function is as follows. Involved in the biosynthesis of isoprenoids. Catalyzes the 1,3-allylic rearrangement of the homoallylic substrate isopentenyl (IPP) to its allylic isomer, dimethylallyl diphosphate (DMAPP). This is Isopentenyl-diphosphate delta-isomerase from Kitasatospora griseola (Streptomyces griseolosporeus).